The sequence spans 555 residues: Potassium-transporting ATPase potassium-binding subunit (555 aa).

Helical transmembrane passes span 2–22 (IWVA…PTGI), 60–80 (QYAL…YFIF), 130–150 (IGIT…VMAF), 173–193 (VFLP…VPQT), 246–266 (MSNI…PFTY), 278–298 (ILFV…TTSE), 374–394 (AGFV…GLMV), 412–432 (LIAV…ALAL), 483–503 (LVMF…AASL), and 525–545 (GIFI…MLVL).

This sequence belongs to the KdpA family. In terms of assembly, the system is composed of three essential subunits: KdpA, KdpB and KdpC.

It is found in the cell membrane. Its function is as follows. Part of the high-affinity ATP-driven potassium transport (or Kdp) system, which catalyzes the hydrolysis of ATP coupled with the electrogenic transport of potassium into the cytoplasm. This subunit binds the extracellular potassium ions and delivers the ions to the membrane domain of KdpB through an intramembrane tunnel. The chain is Potassium-transporting ATPase potassium-binding subunit from Bacillus mycoides (strain KBAB4) (Bacillus weihenstephanensis).